We begin with the raw amino-acid sequence, 366 residues long: tRNA/tmRNA (uracil-C(5))-methyltransferase (366 aa).

Residues Gln-190, Tyr-218, Asn-223, Glu-239, and Asp-299 each contribute to the S-adenosyl-L-methionine site. Cys-324 (nucleophile) is an active-site residue. Glu-358 acts as the Proton acceptor in catalysis.

The protein belongs to the class I-like SAM-binding methyltransferase superfamily. RNA M5U methyltransferase family. TrmA subfamily.

The catalysed reaction is uridine(54) in tRNA + S-adenosyl-L-methionine = 5-methyluridine(54) in tRNA + S-adenosyl-L-homocysteine + H(+). The enzyme catalyses uridine(341) in tmRNA + S-adenosyl-L-methionine = 5-methyluridine(341) in tmRNA + S-adenosyl-L-homocysteine + H(+). Functionally, dual-specificity methyltransferase that catalyzes the formation of 5-methyluridine at position 54 (m5U54) in all tRNAs, and that of position 341 (m5U341) in tmRNA (transfer-mRNA). The sequence is that of tRNA/tmRNA (uracil-C(5))-methyltransferase from Escherichia coli O7:K1 (strain IAI39 / ExPEC).